A 67-amino-acid polypeptide reads, in one-letter code: uncharacterized protein (67 aa).

2 helical membrane passes run 10-32 and 44-66; these read NLSH…TAFI and ATLT…MGQW.

The protein localises to the cell membrane. This is an uncharacterized protein from Archaeoglobus fulgidus (strain ATCC 49558 / DSM 4304 / JCM 9628 / NBRC 100126 / VC-16).